The primary structure comprises 245 residues: Pathogenesis-related thaumatin-like protein 3.6 (245 aa).

The N-terminal stretch at 1–19 (GSIPFWIALIASFSVFLQG) is a signal peptide. Intrachain disulfides connect Cys33–Cys226, Cys74–Cys84, Cys89–Cys95, Cys142–Cys215, Cys148–Cys198, Cys156–Cys166, Cys170–Cys179, and Cys180–Cys185. N-linked (GlcNAc...) asparagine glycosylation is present at Asn90. Asn186 is a glycosylation site (N-linked (GlcNAc...) asparagine).

The protein belongs to the thaumatin family. Mostly expressed in strobili, and, to a lower extent, in roots of seedlings and saplings.

Its function is as follows. May be involved in disease resistance. The protein is Pathogenesis-related thaumatin-like protein 3.6 of Cryptomeria japonica (Japanese cedar).